Here is a 446-residue protein sequence, read N- to C-terminus: Ribosomal protein uS12 methylthiotransferase RimO (446 aa).

Positions 4 to 119 constitute an MTTase N-terminal domain; the sequence is YKVGMVSLGC…IDKVIKEFIE (116 aa). [4Fe-4S] cluster-binding residues include Cys13, Cys48, Cys82, Cys157, Cys161, and Cys164. One can recognise a Radical SAM core domain in the interval 143-373; sequence TTQKESAYIR…MLSQEKISND (231 aa). One can recognise a TRAM domain in the interval 376-442; it reads KLKVNKKYDI…DYDLIGVVED (67 aa).

This sequence belongs to the methylthiotransferase family. RimO subfamily. The cofactor is [4Fe-4S] cluster.

Its subcellular location is the cytoplasm. It catalyses the reaction L-aspartate(89)-[ribosomal protein uS12]-hydrogen + (sulfur carrier)-SH + AH2 + 2 S-adenosyl-L-methionine = 3-methylsulfanyl-L-aspartate(89)-[ribosomal protein uS12]-hydrogen + (sulfur carrier)-H + 5'-deoxyadenosine + L-methionine + A + S-adenosyl-L-homocysteine + 2 H(+). In terms of biological role, catalyzes the methylthiolation of an aspartic acid residue of ribosomal protein uS12. In Clostridium botulinum (strain Eklund 17B / Type B), this protein is Ribosomal protein uS12 methylthiotransferase RimO.